The sequence spans 346 residues: Peripherin-2 (346 aa).

The Cytoplasmic segment spans residues 1–18 (MALLKVKFDQKKRVKLAQ). Residues 19–41 (GLWLMNWFSVLAGIIIFGLGLFL) traverse the membrane as a helical segment. The Lumenal segment spans residues 42-62 (KIELRKRSDVMNNSESHFVPN). N53 carries an N-linked (GlcNAc...) asparagine glycan. The helical transmembrane segment at 63-79 (SLIGVGVLSCVFNSLAG) threads the bilayer. The Cytoplasmic portion of the chain corresponds to 80–101 (KICYDALDPAKYAKWKPWLKPY). Residues 102-122 (LAVCVLFNVVLFLVALCCFLL) form a helical membrane-spanning segment. Over 123 to 264 (RGSLESTLAH…LSYYSNLMNT (142 aa)) the chain is Lumenal. N229 and N263 each carry an N-linked (GlcNAc...) asparagine glycan. A helical transmembrane segment spans residues 265 to 283 (TGAVTLLVWLFEVTITVGL). The Cytoplasmic segment spans residues 284–346 (RYLHTALEGM…EDAGQAPAAG (63 aa)). The interaction with MREG stretch occupies residues 341–346 (QAPAAG).

It belongs to the PRPH2/ROM1 family. Homodimer; disulfide-linked. Forms a homotetramer. Forms a heterotetramer with ROM1. Homotetramer and heterotetramer core complexes go on to form higher order complexes by formation of intermolecular disulfide bonds. Interacts with MREG. Interacts with STX3. Interacts with SNAP25. Retina (photoreceptor). In rim region of ROS (rod outer segment) disks.

The protein localises to the membrane. The protein resides in the cell projection. It is found in the cilium. It localises to the photoreceptor outer segment. Its subcellular location is the photoreceptor inner segment. Its function is as follows. Essential for retina photoreceptor outer segment disk morphogenesis, may also play a role with ROM1 in the maintenance of outer segment disk structure. Required for the maintenance of retinal outer nuclear layer thickness. Required for the correct development and organization of the photoreceptor inner segment. This chain is Peripherin-2 (PRPH2), found in Bos taurus (Bovine).